The following is a 142-amino-acid chain: Nucleoside diphosphate kinase (142 aa).

ATP contacts are provided by Lys-9, Phe-57, Arg-85, Thr-91, Arg-102, and Asn-112. His-115 (pros-phosphohistidine intermediate) is an active-site residue.

This sequence belongs to the NDK family. As to quaternary structure, homotetramer. Requires Mg(2+) as cofactor.

The protein resides in the cytoplasm. The catalysed reaction is a 2'-deoxyribonucleoside 5'-diphosphate + ATP = a 2'-deoxyribonucleoside 5'-triphosphate + ADP. It catalyses the reaction a ribonucleoside 5'-diphosphate + ATP = a ribonucleoside 5'-triphosphate + ADP. In terms of biological role, major role in the synthesis of nucleoside triphosphates other than ATP. The ATP gamma phosphate is transferred to the NDP beta phosphate via a ping-pong mechanism, using a phosphorylated active-site intermediate. The chain is Nucleoside diphosphate kinase from Dehalococcoides mccartyi (strain ATCC BAA-2100 / JCM 16839 / KCTC 5957 / BAV1).